We begin with the raw amino-acid sequence, 365 residues long: Phosphatidylcholine:ceramide cholinephosphotransferase 4 (365 aa).

The Cytoplasmic portion of the chain corresponds to 1–44; it reads MISYPFFSLSPPGLVPPPMAVPPVEMYSGSFWNRMRKPLPLRTQ. Residues 45 to 65 traverse the membrane as a helical segment; the sequence is VIRFTVVFVIVSFILAVALQI. Over 66–92 the chain is Lumenal; it reads THERMPDPKVTKPLPDLGFELLTKVPG. The chain crosses the membrane as a helical span at residues 93-113; it reads MYVLADCCIGFLNILSVFTAF. Over 114–165 the chain is Cytoplasmic; sequence KLYLLHRHCVGSGEPELPCNIPGVSRFFLSVWLCKENCRIELRNIHTIAWIR. A helical transmembrane segment spans residues 166–186; sequence FITSYALLLLFRSAVIVMTSL. Residues 187 to 229 lie on the Lumenal side of the membrane; that stretch reads PAPDDLCQDPPKIENPVKNVILTVLTAGGGSIHCGDLMYSGHT. Histidine 228 is a catalytic residue. A helical membrane pass occupies residues 230 to 250; it reads VILTLHLMFHWIYGAMVHWSF. Arginine 251 is a topological domain (cytoplasmic). The chain crosses the membrane as a helical span at residues 252–272; sequence PVVTVVAIFGYYCIVASRFHY. Active-site residues include histidine 271 and aspartate 275. Residues 273–275 are Lumenal-facing; it reads TDD. The chain crosses the membrane as a helical span at residues 276–296; that stretch reads VLVAIYLTIATFIAVGHNADG. Topologically, residues 297-365 are cytoplasmic; it reads APWQLQLFIR…SLMFKCGAYV (69 aa).

Belongs to the sphingomyelin synthase family.

Its subcellular location is the golgi apparatus membrane. The enzyme catalyses an N-acylsphing-4-enine + a 1,2-diacyl-sn-glycero-3-phosphocholine = a sphingomyelin + a 1,2-diacyl-sn-glycerol. It carries out the reaction an N-acylsphinganine + a 1,2-diacyl-sn-glycero-3-phosphocholine = an N-acylsphinganine-1-phosphocholine + a 1,2-diacyl-sn-glycerol. It catalyses the reaction an N-acylsphing-4-enine + a 1,2-diacyl-sn-glycero-3-phosphoethanolamine = an N-acylsphing-4-enine 1-phosphoethanolamine + a 1,2-diacyl-sn-glycerol. The catalysed reaction is an N-acylsphinganine + a 1,2-diacyl-sn-glycero-3-phosphoethanolamine = an N-acylsphinganine-1-phosphoethanolamine + a 1,2-diacyl-sn-glycerol. The enzyme catalyses a 1,2-diacyl-sn-glycero-3-phospho-(1D-myo-inositol) + an N-acylsphing-4-enine = an N-acylsphing-4-enine-(1D-myo-inositol) + a 1,2-diacyl-sn-glycerol. It carries out the reaction an N-acylsphinganine + a 1,2-diacyl-sn-glycero-3-phospho-(1D-myo-inositol) = an N-acylsphinganine-(1D-myo-inositol) + a 1,2-diacyl-sn-glycerol. Functionally, bifunctional sphingomyelin (SM)/ethanolamine phosphorylceramide (EPC) synthase with minimal inositol phosphorylceramide (IPC) synthase activity. Specificity is likely to be defined by residues in the lumenal catalytic domain that interact with the polar head groups of the phospholipid donors. SM is synthesized by both stages of the parasite life cycle, bloodstream forms (BSF) and procyclic forms (PCF), by transferring the phosphoryl headgroup from a 1,2-diacyl-sn-glycero-3-phosphocholine to an N-acylsphing-4-enine (ceramide) or an N-acylsphinganine (dihydroceramide) with release of 1,2-diacyl-sn-glycerol. Also catalyzes the reverse reaction, production of ceramide from sphingomyelin. EPC is synthesized by transferring phosphoethanolamine from a 1,2-diacyl-sn-glycero-3-phosphoethanolamine to ceramide or dihydroceramide by BSF and PCF, while IPC is confined to PCF. The ceramide/dihydroceramide ratios are skewed towards dihydroceramide in PCF parasites and ceramide in BSF parasites, this is likely due to differential expression and/or regulation of dihydroceramide desaturase, the enzyme responsible for converting dihydroceramide to ceramide. This is Phosphatidylcholine:ceramide cholinephosphotransferase 4 from Trypanosoma brucei brucei.